We begin with the raw amino-acid sequence, 123 residues long: Large ribosomal subunit protein uL18 (123 aa).

The protein belongs to the universal ribosomal protein uL18 family. As to quaternary structure, part of the 50S ribosomal subunit; part of the 5S rRNA/L5/L18/L25 subcomplex. Contacts the 5S and 23S rRNAs.

In terms of biological role, this is one of the proteins that bind and probably mediate the attachment of the 5S RNA into the large ribosomal subunit, where it forms part of the central protuberance. The polypeptide is Large ribosomal subunit protein uL18 (Bifidobacterium animalis subsp. lactis (strain AD011)).